The sequence spans 173 residues: MALMRSSWPLRLSITEQRSLSLLKSPEISCPGPVRSSSMMLLSLCPIPPTRSGRTSNSGNRGPVMTSTSSINSSKSWSGTLLPSLIPRCAMQPKHTLSQWRRDAVPTRQSISSTCWALTVQKKTGFPSKSTGRITKNTFSTASCGKRKANRVMTSSRKLSTTVPWMYSSPQSW.

The interval 49 to 72 (PTRSGRTSNSGNRGPVMTSTSSIN) is disordered.

This is an uncharacterized protein from Human adenovirus B serotype 7 (HAdV-7).